The primary structure comprises 210 residues: Outer-membrane lipoprotein LolB (210 aa).

The N-terminal stretch at 1 to 26 (MSKLKIDTKRRFSLLIALVLIISLSS) is a signal peptide. A lipid anchor (N-palmitoyl cysteine) is attached at cysteine 27. A lipid anchor (S-diacylglycerol cysteine) is attached at cysteine 27.

The protein belongs to the LolB family. In terms of assembly, monomer.

It localises to the cell outer membrane. In terms of biological role, plays a critical role in the incorporation of lipoproteins in the outer membrane after they are released by the LolA protein. In Francisella tularensis subsp. novicida (strain U112), this protein is Outer-membrane lipoprotein LolB.